A 168-amino-acid chain; its full sequence is Phospholipase A and acyltransferase 1 (168 aa).

Residues 1–138 are Cytoplasmic-facing; the sequence is MAFNDCFSLN…GEGVSEQANR (138 aa). The region spanning 20-135 is the LRAT domain; that stretch reads LIEVFRPGYQ…LRYGEGVSEQ (116 aa). Histidine 30 is an active-site residue. Catalysis depends on cysteine 119, which acts as the Acyl-thioester intermediate. The chain crosses the membrane as a helical span at residues 139–159; the sequence is AISTVEFVTAAVGVFSFLGLF. The Lumenal portion of the chain corresponds to 160-168; sequence PKGQRAKYY.

Belongs to the H-rev107 family. As to expression, abundantly expressed in testis, skeletal muscle, brain, and heart. Highly expressed in the testis, skeletal muscle, brain, heart, and thyroid.

The protein resides in the membrane. It is found in the cytoplasm. The protein localises to the nucleus. The catalysed reaction is a 1,2-diacyl-sn-glycero-3-phosphocholine + H2O = a 1-acyl-sn-glycero-3-phosphocholine + a fatty acid + H(+). It carries out the reaction a 1,2-diacyl-sn-glycero-3-phosphocholine + H2O = a 2-acyl-sn-glycero-3-phosphocholine + a fatty acid + H(+). The enzyme catalyses 1,2-dihexadecanoyl-sn-glycero-3-phosphocholine + H2O = 2-hexadecanoyl-sn-glycero-3-phosphocholine + hexadecanoate + H(+). It catalyses the reaction 1,2-dihexadecanoyl-sn-glycero-3-phosphocholine + H2O = 1-hexadecanoyl-sn-glycero-3-phosphocholine + hexadecanoate + H(+). The catalysed reaction is 1-hexadecanoyl-2-(5Z,8Z,11Z,14Z-eicosatetraenoyl)-sn-glycero-3-phosphoethanolamine + H2O = 2-(5Z,8Z,11Z,14Z)-eicosatetraenoyl-sn-glycero-3-phosphoethanolamine + hexadecanoate + H(+). It carries out the reaction 1-hexadecanoyl-2-(5Z,8Z,11Z,14Z-eicosatetraenoyl)-sn-glycero-3-phosphoethanolamine + H2O = 1-hexadecanoyl-sn-glycero-3-phosphoethanolamine + (5Z,8Z,11Z,14Z)-eicosatetraenoate + H(+). The enzyme catalyses 1,2-di-(9Z-octadecenoyl)-sn-glycero-3-phosphoethanolamine + 1,2-dihexadecanoyl-sn-glycero-3-phosphocholine = hexadecanoyl-sn-glycero-3-phosphocholine + N-hexadecanoyl-1,2-di-(9Z-octadecenoyl)-sn-glycero-3-phosphoethanolamine + H(+). It catalyses the reaction 1,2-dihexadecanoyl-sn-glycero-3-phosphocholine + a 2-acyl-sn-glycero-3-phosphocholine = a 1-hexadecanoyl-2-acyl-sn-glycero-3-phosphocholine + 2-hexadecanoyl-sn-glycero-3-phosphocholine. Functionally, exhibits both phospholipase A1/2 and acyltransferase activities. Shows phospholipase A1 (PLA1) and A2 (PLA2) activity, catalyzing the calcium-independent release of fatty acids from the sn-1 or sn-2 position of glycerophospholipids. Shows O-acyltransferase activity, catalyzing the transfer of a fatty acyl group from glycerophospholipid to the hydroxyl group of lysophospholipid. Shows N-acyltransferase activity, catalyzing the calcium-independent transfer of a fatty acyl group at the sn-1 position of phosphatidylcholine (PC) and other glycerophospholipids to the primary amine of phosphatidylethanolamine (PE), forming N-acylphosphatidylethanolamine (NAPE) which serves as precursor for N-acylethanolamines (NAEs). The polypeptide is Phospholipase A and acyltransferase 1 (Homo sapiens (Human)).